We begin with the raw amino-acid sequence, 247 residues long: 5'-nucleotidase SurE (247 aa).

A divalent metal cation-binding residues include Asp-8, Asp-9, Ser-39, and Asn-91.

The protein belongs to the SurE nucleotidase family. Requires a divalent metal cation as cofactor.

Its subcellular location is the cytoplasm. The enzyme catalyses a ribonucleoside 5'-phosphate + H2O = a ribonucleoside + phosphate. Its function is as follows. Nucleotidase that shows phosphatase activity on nucleoside 5'-monophosphates. This Pelobacter propionicus (strain DSM 2379 / NBRC 103807 / OttBd1) protein is 5'-nucleotidase SurE.